The following is a 129-amino-acid chain: UPF0148 protein APE_0207 (129 aa).

Belongs to the UPF0148 family.

This chain is UPF0148 protein APE_0207, found in Aeropyrum pernix (strain ATCC 700893 / DSM 11879 / JCM 9820 / NBRC 100138 / K1).